An 84-amino-acid polypeptide reads, in one-letter code: UPF0248 protein Pisl_1919 (84 aa).

This sequence belongs to the UPF0248 family.

The polypeptide is UPF0248 protein Pisl_1919 (Pyrobaculum islandicum (strain DSM 4184 / JCM 9189 / GEO3)).